We begin with the raw amino-acid sequence, 133 residues long: MSFNPDYESVAKAFIQHYYSKFDVGDGMSRAQGLSDLYDPENSYMTFEGQQAKGRDGILQKFTTLGFTKIQRAITVIDSQPLYDGSIQVMVLGQLKTDEDPINPFSQVFILRPNNQGSYFIGNEIFRLDLHNN.

One can recognise an NTF2 domain in the interval 10–128; the sequence is VAKAFIQHYY…YFIGNEIFRL (119 aa).

Its subcellular location is the cytoplasm. In terms of biological role, facilitates protein transport into the nucleus. Could be part of a multicomponent system of cytosolic factors that assemble at the pore complex during nuclear import. The protein is Probable nuclear transport factor 2 (ran-4) of Caenorhabditis elegans.